A 166-amino-acid chain; its full sequence is Endoribonuclease YbeY (166 aa).

3 residues coordinate Zn(2+): H132, H136, and H142.

It belongs to the endoribonuclease YbeY family. It depends on Zn(2+) as a cofactor.

It is found in the cytoplasm. In terms of biological role, single strand-specific metallo-endoribonuclease involved in late-stage 70S ribosome quality control and in maturation of the 3' terminus of the 16S rRNA. This chain is Endoribonuclease YbeY, found in Clostridium botulinum (strain 657 / Type Ba4).